We begin with the raw amino-acid sequence, 142 residues long: Transcriptional regulator MraZ (142 aa).

SpoVT-AbrB domains follow at residues 5-51 (ASAL…PRPE) and 77-120 (AMDV…DAQT).

Belongs to the MraZ family. As to quaternary structure, forms oligomers.

It localises to the cytoplasm. The protein localises to the nucleoid. This is Transcriptional regulator MraZ from Burkholderia mallei (strain NCTC 10247).